The chain runs to 316 residues: MASLKVPATVPLPEEDAEQLYKAFKGWGTNERMIISILAHRNATQRSFIRAVYAANYNKDLLKELDRELSGDFERAVMLWTFEPAERDAYLAKESTKMFTKNNWVLVEIACTRSALELFNAKQAYQARYKTSLEEDVAYHTSGDIRKLLVPLVSTFRYDGDEVNMTLARSEAKILHEKIKEKAYADDDLIRILTTRSKAQISATLNHYKNNFGTSMSKYLKEDSENEYIQLLKAVIKCLTYPEKYFEKVLRQAINKLGTDEWGLTRVVTTRAEFDMERIKEEYIRRNSVPLDRAIAKDTHGDYEDILLALLGHDHA.

Alanine 2 is subject to N-acetylalanine. Annexin repeat units follow at residues 11 to 82 (PLPE…LWTF), 83 to 154 (EPAE…PLVS), 166 to 237 (TLAR…AVIK), and 241 to 312 (YPEK…ALLG). Positions 24, 26, 28, and 68 each coordinate Ca(2+). Serine 95 is modified (phosphoserine). A phosphothreonine mark is found at threonine 100 and threonine 112. Tyrosine 129 is modified (phosphotyrosine). Ca(2+)-binding residues include isoleucine 254 and glycine 258. Tyrosine 283 carries the post-translational modification Phosphotyrosine. Serine 288 is subject to Phosphoserine. Aspartate 298, threonine 299, and glutamate 304 together coordinate Ca(2+).

It belongs to the annexin (TC 1.A.31.1) family. In terms of tissue distribution, expressed in flowers.

This chain is Annexin D7 (ANNAT7), found in Arabidopsis thaliana (Mouse-ear cress).